Here is a 386-residue protein sequence, read N- to C-terminus: DNA-directed RNA polymerase subunit Rpo1C (386 aa).

The protein belongs to the RNA polymerase beta' chain family. Part of the RNA polymerase complex.

It is found in the cytoplasm. The catalysed reaction is RNA(n) + a ribonucleoside 5'-triphosphate = RNA(n+1) + diphosphate. In terms of biological role, DNA-dependent RNA polymerase (RNAP) catalyzes the transcription of DNA into RNA using the four ribonucleoside triphosphates as substrates. Forms part of the jaw domain. This chain is DNA-directed RNA polymerase subunit Rpo1C, found in Methanococcus maripaludis (strain C6 / ATCC BAA-1332).